A 321-amino-acid polypeptide reads, in one-letter code: Protein stand still (321 aa).

Coiled-coil stretches lie at residues 74–103 and 147–167; these read KLHE…RKKA and KQEQ…KANL. Basic and acidic residues predominate over residues 146-162; sequence HKQEQEGATRKLEDSTS. Disordered stretches follow at residues 146-166 and 227-248; these read HKQE…DKAN and QVPP…MEDV. A compositionally biased stretch (low complexity) spans 235–244; the sequence is SKSSGSLASS. A coiled-coil region spans residues 272 to 292; it reads QRDVLQRLERSMAQISQELHC.

As to expression, germ cells specific. Expressed in all germ cells. During the first instar larvae, it is expressed in all germ cells of both sexes. In third instar larvae, it decreases in male germ cells while it remains in female germ cells. In adult ovary, it is expressed in cells of the germarium, including the stem cells. In the early previtellogenic stages, it is highly expressed in the nurse cells. During vitellogenesis, it is not translocated into the maturing egg. In testes, it is only expressed during some steps of male germline differentiation. At the apex testis, it is expressed at low level in stem cells and dividing spermatogonia, while in newly formed 16-cell cysts of primary spermatocytes, it is transiently but strongly expressed before vanishing during spermatocyte growth phase.

It is found in the nucleus. Functionally, essential in the female germline for proper survival, sex determination and differentiation. Participates in the transcriptional activation of Otu. Does not regulate the expression of Ovo. This is Protein stand still (stil) from Drosophila melanogaster (Fruit fly).